The chain runs to 783 residues: Lon protease (783 aa).

Residues 16 to 210 (LPLLASRGVV…KLLEIIKDEI (195 aa)) enclose the Lon N-terminal domain. 361–368 (GAPGVGKT) is a binding site for ATP. The region spanning 597-778 (KDRVGVATGM…DQVLDLILGG (182 aa)) is the Lon proteolytic domain. Residues S684 and K727 contribute to the active site.

This sequence belongs to the peptidase S16 family. As to quaternary structure, homohexamer. Organized in a ring with a central cavity.

The protein localises to the cytoplasm. It carries out the reaction Hydrolysis of proteins in presence of ATP.. Functionally, ATP-dependent serine protease that mediates the selective degradation of mutant and abnormal proteins as well as certain short-lived regulatory proteins. Required for cellular homeostasis and for survival from DNA damage and developmental changes induced by stress. Degrades polypeptides processively to yield small peptide fragments that are 5 to 10 amino acids long. Binds to DNA in a double-stranded, site-specific manner. In Halothermothrix orenii (strain H 168 / OCM 544 / DSM 9562), this protein is Lon protease.